We begin with the raw amino-acid sequence, 430 residues long: UDP-N-acetylglucosamine 1-carboxyvinyltransferase (430 aa).

Phosphoenolpyruvate is bound at residue 22–23; that stretch reads KN. Arginine 102 contacts UDP-N-acetyl-alpha-D-glucosamine. Cysteine 126 (proton donor) is an active-site residue. A 2-(S-cysteinyl)pyruvic acid O-phosphothioketal modification is found at cysteine 126. Residues 131 to 135, 172 to 175, aspartate 317, and isoleucine 339 contribute to the UDP-N-acetyl-alpha-D-glucosamine site; these read RPVDL and KVSV.

Belongs to the EPSP synthase family. MurA subfamily.

Its subcellular location is the cytoplasm. It carries out the reaction phosphoenolpyruvate + UDP-N-acetyl-alpha-D-glucosamine = UDP-N-acetyl-3-O-(1-carboxyvinyl)-alpha-D-glucosamine + phosphate. It participates in cell wall biogenesis; peptidoglycan biosynthesis. In terms of biological role, cell wall formation. Adds enolpyruvyl to UDP-N-acetylglucosamine. In Allorhizobium ampelinum (strain ATCC BAA-846 / DSM 112012 / S4) (Agrobacterium vitis (strain S4)), this protein is UDP-N-acetylglucosamine 1-carboxyvinyltransferase.